A 418-amino-acid polypeptide reads, in one-letter code: Light-independent protochlorophyllide reductase subunit N (418 aa).

[4Fe-4S] cluster is bound by residues C17, C42, and C103.

The protein belongs to the BchN/ChlN family. In terms of assembly, protochlorophyllide reductase is composed of three subunits; ChlL, ChlN and ChlB. Forms a heterotetramer of two ChlB and two ChlN subunits. The cofactor is [4Fe-4S] cluster.

It catalyses the reaction chlorophyllide a + oxidized 2[4Fe-4S]-[ferredoxin] + 2 ADP + 2 phosphate = protochlorophyllide a + reduced 2[4Fe-4S]-[ferredoxin] + 2 ATP + 2 H2O. The protein operates within porphyrin-containing compound metabolism; chlorophyll biosynthesis (light-independent). Functionally, component of the dark-operative protochlorophyllide reductase (DPOR) that uses Mg-ATP and reduced ferredoxin to reduce ring D of protochlorophyllide (Pchlide) to form chlorophyllide a (Chlide). This reaction is light-independent. The NB-protein (ChlN-ChlB) is the catalytic component of the complex. This Prochlorococcus marinus subsp. pastoris (strain CCMP1986 / NIES-2087 / MED4) protein is Light-independent protochlorophyllide reductase subunit N.